Here is a 98-residue protein sequence, read N- to C-terminus: NADH-ubiquinone oxidoreductase chain 4L (98 aa).

Helical transmembrane passes span 29–49 and 61–81; these read SLLCLEGMMLSMFILSTLLIL and ILLLVFAACEAAIGLALLVTV.

It belongs to the complex I subunit 4L family. As to quaternary structure, core subunit of respiratory chain NADH dehydrogenase (Complex I) which is composed of 45 different subunits.

The protein localises to the mitochondrion inner membrane. The catalysed reaction is a ubiquinone + NADH + 5 H(+)(in) = a ubiquinol + NAD(+) + 4 H(+)(out). In terms of biological role, core subunit of the mitochondrial membrane respiratory chain NADH dehydrogenase (Complex I) which catalyzes electron transfer from NADH through the respiratory chain, using ubiquinone as an electron acceptor. Part of the enzyme membrane arm which is embedded in the lipid bilayer and involved in proton translocation. In Cheirogaleus medius (Fat-tailed dwarf lemur), this protein is NADH-ubiquinone oxidoreductase chain 4L (MT-ND4L).